A 1088-amino-acid polypeptide reads, in one-letter code: Protein argonaute 18 (1088 aa).

The segment at 1 to 220 is disordered; sequence MASRGGGQHQ…QPPPDLPQAP (220 aa). 6 stretches are compositionally biased toward gly residues: residues 20-30, 51-86, 95-127, 135-148, 161-182, and 191-206; these read GGYGRGGGGGR, YPGG…GQGR, GRGY…GGYH, GRGG…GGGY, ARGG…YGRG, and GRGG…GGGS. Over residues 211 to 220 the composition is skewed to pro residues; it reads QPPPDLPQAP. The PAZ domain occupies 477-574; the sequence is TVGYFLNNYG…LPMELCNIVP (98 aa). Residues 747–1056 enclose the Piwi domain; that stretch reads LLLVVMTDDK…LAFRARFYLT (310 aa).

The protein belongs to the argonaute family. Ago subfamily.

Functionally, probably involved in the RNA silencing pathway. May bind to short RNAs such as microRNAs (miRNAs) or short interfering RNAs (siRNAs), and represses the translation of mRNAs which are complementary to them. This chain is Protein argonaute 18 (AGO18), found in Oryza sativa subsp. japonica (Rice).